The sequence spans 297 residues: Transcriptional regulator protein Pur-beta (297 aa).

2 disordered regions span residues 1 to 26 (MADG…EQET) and 275 to 297 (QERH…VDDD). N-acetylalanine is present on A2. The interval 23–246 (EQETQELASK…LRVSEVKPSY (224 aa)) is DNA-binding. The span at 275-288 (QERHRDKMYERREE) shows a compositional bias: basic and acidic residues.

The protein belongs to the PUR DNA-binding protein family.

Its subcellular location is the nucleus. Transcriptional regulator which can act as an activator or a repressor. The sequence is that of Transcriptional regulator protein Pur-beta (purb) from Danio rerio (Zebrafish).